The sequence spans 154 residues: MSASVELSSYRDQHFKGSRSEQERSLRDSCTLYVGNLSFYTTEEQIHELFSRCGDVRVIVMGLDKYKKTPCGFCFVEYYIRSEAEAAMRFVNGTRLDDRLIRVDWDAGFIEGRQYGRGKTGGQVRDEYRTDYDAGRGGYGKLLSQKIAPNTDNR.

MRNA-binding positions include Tyr-10, Tyr-33, 102-106 (RVDWD), 113-117 (RQYGR), and 123-124 (QV). Residues 30 to 108 (CTLYVGNLSF…RLIRVDWDAG (79 aa)) enclose the RRM domain.

Belongs to the RRM NCBP2 family. Component of the nuclear cap-binding complex (CBC), a heterodimer composed of Cbp80 and Cbp20 that interacts with m7GpppG-capped RNA. Interacts with Ars2.

It is found in the nucleus. In terms of biological role, component of the cap-binding complex (CBC), which binds co-transcriptionally to the 5' cap of pre-mRNAs and is involved in various processes such as pre-mRNA splicing and RNA-mediated gene silencing (RNAi). The CBC complex is involved in miRNA-mediated RNA interference via its interaction with Ars2 and is required for primary microRNAs (miRNAs) processing. Also involved in innate immunity via the short interfering RNAs (siRNAs) processing machinery by restricting the viral RNA production. In the CBC complex, Cbp20 recognizes and binds capped RNAs (m7GpppG-capped RNA) but requires Cbp80 to stabilize the movement of its N-terminal loop and lock the CBC into a high affinity cap-binding state with the cap structure. This is Nuclear cap-binding protein subunit 2 (Cbp20) from Drosophila yakuba (Fruit fly).